Consider the following 498-residue polypeptide: Pre-glycoprotein polyprotein GP complex (498 aa).

A lipid anchor (N-myristoyl glycine; by host) is attached at Gly-2. Residues 2–17 are Extracellular-facing; the sequence is GQIVTMFEALPHIIDE. A helical membrane pass occupies residues 18 to 33; that stretch reads VINIVIIVLIIITSIK. The Cytoplasmic segment spans residues 34–58; sequence AVYNFATCGILALVSFLFLAGRSCG. A Zn(2+)-binding site is contributed by Cys-57. Residues 59 to 438 are Extracellular-facing; it reads MYGLNGPDIY…QGSTPLALMD (380 aa). Residues Asn-85, Asn-95, Asn-114, Asn-124, and Asn-171 are each glycosylated (N-linked (GlcNAc...) asparagine; by host). 6 disulfide bridges follow: Cys-92/Cys-239, Cys-123/Cys-160, Cys-184/Cys-220, Cys-285/Cys-298, Cys-307/Cys-316, and Cys-370/Cys-391. N-linked (GlcNAc...) asparagine; by host glycosylation occurs at Asn-232. N-linked (GlcNAc...) asparagine; by host glycans are attached at residues Asn-371, Asn-396, and Asn-401. Residues 439 to 459 form a helical membrane-spanning segment; that stretch reads LLMFSTSAYLISIFLHFVRIP. Residues 460–498 are Cytoplasmic-facing; that stretch reads THRHIKGGSCPKPHRLTNKGICSCGAFKVPGVKTIWKRR. His-461, His-463, Cys-469, His-473, Cys-481, and Cys-483 together coordinate Zn(2+).

It belongs to the arenaviridae GPC protein family. As to quaternary structure, interacts with glycoprotein G2. Part of the GP complex (GP-C) together with glycoprotein G1 and glycoprotein G2. The GP-complex interacts with protein Z, which interacts with ribonucleocapsid; these interactions may induce virion budding. In terms of assembly, homotrimer; disulfide-linked. In pre-fusion state, G1 homotrimers bind G2 homotrimers via ionic interactions. Part of the GP complex (GP-C) together with glycoprotein G2 and the stable signal peptide. Interacts with the primary host receptor DAG1 on the cell surface. The GP-complex interacts with protein Z, which interacts with ribonucleocapsid; these interactions may induce virion budding. Homotrimer. Interacts with the stable signal peptide. In pre-fusion state, G2 homotrimers bind G1 homotrimers via ionic interactions. Part of the GP complex (GP-C) together with glycoprotein G1 and the stable signal peptide. Acidification in the endosome triggers rearrangements, which ultimately leads to a 6 helix bundle formed by the two heptad repeat domains (HR1 and HR2) in post-fusion state. The GP-complex interacts with protein Z, which interacts with ribonucleocapsid; these interactions may induce virion budding. Post-translationally, specific enzymatic cleavages in vivo yield mature proteins. GP-C polyprotein is cleaved in the endoplasmic reticulum by the host protease MBTPS1. Only cleaved glycoprotein is incorporated into virions. The SSP remains stably associated with the GP complex following cleavage by signal peptidase and plays crucial roles in the trafficking of GP through the secretory pathway. In terms of processing, myristoylation is necessary for GP2-mediated fusion activity.

It is found in the virion membrane. The protein localises to the host endoplasmic reticulum membrane. The protein resides in the host Golgi apparatus membrane. It localises to the host cell membrane. Functionally, functions as a cleaved signal peptide that is retained as the third component of the GP complex (GP-C). Helps to stabilize the spike complex in its native conformation. The SSP is required for efficient glycoprotein expression, post-translational maturation cleavage of G1 and G2, glycoprotein transport to the cell surface plasma membrane, formation of infectious virus particles, and acid pH-dependent glycoprotein-mediated cell fusion. Its function is as follows. Forms the virion spikes together with glycoprotein G2. The glycoprotein spike trimers are connected to the underlying matrix. Interacts with the host receptor. Mediates virus attachment to the host primary receptor alpha-dystroglycan DAG1 (alpha-DG) at the cell surface. Down-modulates host DAG1. Forms the virion spikes together with glycoprotein G1. The glycoprotein spike trimers are connected to the underlying matrix. Class I viral fusion protein that directs fusion of viral and host endosomal membranes, leading to delivery of the nucleocapsid into the cytoplasm. Membrane fusion is mediated by irreversible conformational changes induced by acidification. The chain is Pre-glycoprotein polyprotein GP complex from Homo sapiens (Human).